The primary structure comprises 89 residues: Small ribosomal subunit protein uS15 (89 aa).

Belongs to the universal ribosomal protein uS15 family. In terms of assembly, part of the 30S ribosomal subunit. Forms a bridge to the 50S subunit in the 70S ribosome, contacting the 23S rRNA.

Its function is as follows. One of the primary rRNA binding proteins, it binds directly to 16S rRNA where it helps nucleate assembly of the platform of the 30S subunit by binding and bridging several RNA helices of the 16S rRNA. Forms an intersubunit bridge (bridge B4) with the 23S rRNA of the 50S subunit in the ribosome. This chain is Small ribosomal subunit protein uS15, found in Prosthecochloris aestuarii (strain DSM 271 / SK 413).